Consider the following 255-residue polypeptide: MEKCEGIVIRQTSYRESDKIVRMYTREFGKIGVVARGAKKTKSRLAAVTQLFTNGYFTFFGGNGLGTLQQGEVIENFSSIQQDIFMTAYATYVCELLDKATEERQPNPYLYELTFQILRDIDEGYDPQILTQIYEMKMLPVLGLYPTMDKCAICGETTGHFDFSTRSNGIICHRCFEKDRYRMHLPENVVKLLRLFFIFQLDRLGNIDVKQETKDWLQKAIDTYYDENSGLYLKSRKFLRDMDKWENMLKKDSDD.

This sequence belongs to the RecO family.

Its function is as follows. Involved in DNA repair and RecF pathway recombination. This chain is DNA repair protein RecO, found in Listeria welshimeri serovar 6b (strain ATCC 35897 / DSM 20650 / CCUG 15529 / CIP 8149 / NCTC 11857 / SLCC 5334 / V8).